A 537-amino-acid polypeptide reads, in one-letter code: MLWQCWLQQAQRMRMMMKALLRFRATRLDSEMMGGWRRGAQRLAAGVVEGQRTLPQEGAAAGPRNLKEMPGPSTFRNLLEFFWRDGFSRIHEIQQNHIREYGRIFKSHFGPQFVVSIADRDMVAQILRAERDAPQRANMESWQEYRDLRGRSTGLISAEGKKWLAMRSVLRQKILRPRDVFIYAGGVNEVVSDLIKRIKTLRSREDDGETVTNVNDLYFKYSMEAVATILYECRLGCLQNEVPKQTLEYIEALELMFSMFKTTMYAGAIPKWLRPFIPKPWEEFCRSWDGLFRFSQIHVDGRLREIQACLDRGEEVKGGLLTSILISKELTLEELYANMTEMLLAGVDTTSFTLSWATYLLAKNPQAQQMVYDQIVQNLGKDTVPTAEDVPKLPLIRAVLKETLRLFPVLPGNGRVTQDDLVLGGYLIPKGTQLALCHYSTSYDQEYFTAAEDFQPGRWLRHGHLDRVENFGSIPFGYGIRSCIGKRVAELEIHLALIQLLQNFEIRTSPKTQTVLPKTHGLLCPAGAINVRFVNRE.

Cys-483 contributes to the heme binding site.

This sequence belongs to the cytochrome P450 family. Heme is required as a cofactor. As to expression, expressed in the dorsal third of retinal pigment epithelium, but not in the ventral counterpart (at protein level).

It is found in the membrane. It catalyses the reaction all-trans-retinol + 2 reduced [adrenodoxin] + O2 + 2 H(+) = all-trans-3,4-didehydroretinol + 2 oxidized [adrenodoxin] + 2 H2O. Efficiently catalyzes the conversion of all-trans retinol (also called vitamin A1, the precursor of 11-cis retinal) to 3,4-didehydroretinol (also called vitamin A2, the precursor of 11-cis 3,4-didehydroretinal), also acts on all-trans retinal and all-trans retinoic acid. The replacement of 11-cis retinal chromophore in photopigments with 11-cis 3,4-didehydroretinal enhances sensitivity to long-wavelength light. This may improve vision in fresh water which is often turbid. The protein is Cytochrome P450 27C1 (cyp27c1) of Aquarana catesbeiana (American bullfrog).